Here is a 642-residue protein sequence, read N- to C-terminus: Putative ankyrin repeat protein L91 (642 aa).

14 ANK repeats span residues 42–76 (HFTK…VKNP), 85–118 (EGWT…NPNI), 153–186 (NGFT…NVDS), 190–224 (NGET…TLHK), 227–256 (NGFT…DVNA), 260–288 (EGKS…EINH), 292–322 (NDIN…NPNE), 326–360 (NKNA…NPNI), 365–397 (SRTI…NVNA), 401–434 (EGRT…NVNH), 438–470 (DGAH…DVNI), 475–514 (KKWT…NVNA), 518–550 (YGNN…NVNH), and 554–587 (NGDT…NPNI).

In Acanthamoeba polyphaga (Amoeba), this protein is Putative ankyrin repeat protein L91.